Here is a 403-residue protein sequence, read N- to C-terminus: MYRDPEAASPGAPSRDVLLVSAIITVSLSVTVVLCGLCHWCQRKLGKRYKNSLETVGTPDSGRGRSEKKAIKLPAGGKAVNTAPVPGQTPHDESDRRTEPRSSVSDLVNSLTSEMLMLSPGSEEDEAHEGCSRENLGRIQFSVGYNFQESTLTVKIMKAQELPAKDFSGTSDPFVKIYLLPDKKHKLETKVKRKNLNPHWNETFLFEGFPYEKVVQRILYLQVLDYDRFSRNDPIGEVSIPLNKVDLTQMQTFWKDLKPCSDGSGSRGELLLSLCYNPSANSIIVNIIKARNLKAMDIGGTSDPYVKVWLMYKDKRVEKKKTVTMKRNLNPIFNESFAFDIPTEKLRETTIIITVMDKDKLSRNDVIGKIYLSWKSGPGEVKHWKDMIARPRQPVAQWHQLKA.

At 1–16 (MYRDPEAASPGAPSRD) the chain is on the vesicular side. The helical transmembrane segment at 17–37 (VLLVSAIITVSLSVTVVLCGL) threads the bilayer. Topologically, residues 38–403 (CHWCQRKLGK…PVAQWHQLKA (366 aa)) are cytoplasmic. Serine 52 is modified (phosphoserine). The tract at residues 53–106 (LETVGTPDSGRGRSEKKAIKLPAGGKAVNTAPVPGQTPHDESDRRTEPRSSVSD) is disordered. Threonine 58 is subject to Phosphothreonine. Serine 61 carries the post-translational modification Phosphoserine. Residues 90 to 100 (PHDESDRRTEP) show a composition bias toward basic and acidic residues. 2 positions are modified to phosphoserine: serine 119 and serine 122. C2 domains are found at residues 135-255 (NLGR…TFWK) and 266-399 (SRGE…AQWH). Residues aspartate 166, aspartate 172, aspartate 225, aspartate 227, serine 230, aspartate 233, aspartate 297, aspartate 303, aspartate 357, aspartate 359, serine 362, and aspartate 365 each coordinate Ca(2+).

It belongs to the synaptotagmin family. Homodimer. Can also form heterodimers with SYT6, SYT9 and SYT10. Interacts with calmodulin (CALM1, CALM2 or CALM3). Interacts with CD63; required for localization to lysosomes. Interacts with APP. It depends on Ca(2+) as a cofactor. In terms of processing, palmitoylated at its vesicular N-terminus; palmitoylation is required for localization to lysosome and phagocytosis in macrophages. Expressed in a variety of adult and fetal tissues.

The protein localises to the cell membrane. It is found in the presynaptic cell membrane. The protein resides in the cytoplasmic vesicle. It localises to the secretory vesicle. Its subcellular location is the synaptic vesicle membrane. The protein localises to the lysosome membrane. It is found in the phagosome membrane. The protein resides in the peroxisome membrane. It localises to the secretory vesicle membrane. Its function is as follows. Ca(2+) sensor involved in Ca(2+)-dependent exocytosis of secretory and synaptic vesicles through Ca(2+) and phospholipid binding to the C2 domain. Ca(2+) induces binding of the C2-domains to phospholipid membranes and to assembled SNARE-complexes; both actions contribute to triggering exocytosis. SYT7 binds Ca(2+) with high affinity and slow kinetics compared to other synaptotagmins. Involved in Ca(2+)-triggered lysosomal exocytosis, a major component of the plasma membrane repair. Ca(2+)-regulated delivery of lysosomal membranes to the cell surface is also involved in the phagocytic uptake of particles by macrophages. Ca(2+)-triggered lysosomal exocytosis also plays a role in bone remodeling by regulating secretory pathways in osteoclasts and osteoblasts. In case of infection, involved in participates cell invasion by Trypanosoma cruzi via Ca(2+)-triggered lysosomal exocytosis. Involved in cholesterol transport from lysosome to peroxisome by promoting membrane contacts between lysosomes and peroxisomes: probably acts by promoting vesicle fusion by binding phosphatidylinositol-4,5-bisphosphate on peroxisomal membranes. Acts as a key mediator of synaptic facilitation, a process also named short-term synaptic potentiation: synaptic facilitation takes place at synapses with a low initial release probability and is caused by influx of Ca(2+) into the axon terminal after spike generation, increasing the release probability of neurotransmitters. Probably mediates synaptic facilitation by directly increasing the probability of release. May also contribute to synaptic facilitation by regulating synaptic vesicle replenishment, a process required to ensure that synaptic vesicles are ready for the arrival of the next action potential: SYT7 is required for synaptic vesicle replenishment by acting as a sensor for Ca(2+) and by forming a complex with calmodulin. Also acts as a regulator of Ca(2+)-dependent insulin and glucagon secretion in beta-cells. Triggers exocytosis by promoting fusion pore opening and fusion pore expansion in chromaffin cells. Also regulates the secretion of some non-synaptic secretory granules of specialized cells. This Homo sapiens (Human) protein is Synaptotagmin-7.